The chain runs to 512 residues: Hyaluronidase PH-20 (512 aa).

Positions 1–35 (MGELQFKWLFWRSFAESGGTFQTVLIFLFIPYSLT) are cleaved as a signal peptide. Cystine bridges form between Cys60–Cys351 and Cys223–Cys237. Asn63 is a glycosylation site (N-linked (GlcNAc...) asparagine). Catalysis depends on Glu147, which acts as the Proton donor. N-linked (GlcNAc...) asparagine glycosylation is found at Asn165 and Asn179. Residue Asn368 is glycosylated (N-linked (GlcNAc...) asparagine). Cystine bridges form between Cys376–Cys387, Cys381–Cys435, and Cys437–Cys464. N-linked (GlcNAc...) asparagine glycosylation occurs at Asn408.

It belongs to the glycosyl hydrolase 56 family.

The protein localises to the cell membrane. It carries out the reaction Random hydrolysis of (1-&gt;4)-linkages between N-acetyl-beta-D-glucosamine and D-glucuronate residues in hyaluronate.. Functionally, involved in sperm-egg adhesion. Upon fertilization sperm must first penetrate a layer of cumulus cells that surrounds the egg before reaching the zona pellucida. The cumulus cells are embedded in a matrix containing hyaluronic acid which is formed prior to ovulation. This protein aids in penetrating the layer of cumulus cells by digesting hyaluronic acid. The protein is Hyaluronidase PH-20 (Spam1) of Rattus norvegicus (Rat).